The chain runs to 544 residues: Chaperonin GroEL 2 (544 aa).

Residues Thr29–Pro32, Asp86–Thr90, Gly413, and Asp495 each bind ATP. The tract at residues Pro525–Tyr544 is disordered. The span at Ala533–Tyr544 shows a compositional bias: gly residues.

Belongs to the chaperonin (HSP60) family. Forms a cylinder of 14 subunits composed of two heptameric rings stacked back-to-back. Interacts with the co-chaperonin GroES.

Its subcellular location is the cytoplasm. The catalysed reaction is ATP + H2O + a folded polypeptide = ADP + phosphate + an unfolded polypeptide.. In terms of biological role, together with its co-chaperonin GroES, plays an essential role in assisting protein folding. The GroEL-GroES system forms a nano-cage that allows encapsulation of the non-native substrate proteins and provides a physical environment optimized to promote and accelerate protein folding. The sequence is that of Chaperonin GroEL 2 from Synechococcus sp. (strain JA-3-3Ab) (Cyanobacteria bacterium Yellowstone A-Prime).